The following is a 372-amino-acid chain: Glutamate 5-kinase (372 aa).

Lys-14 contributes to the ATP binding site. Substrate contacts are provided by Ser-54, Asp-141, and Asn-153. 173 to 174 (TD) contacts ATP. One can recognise a PUA domain in the interval 280-358 (RGHVVIDAGA…GEIEIVLGYM (79 aa)).

It belongs to the glutamate 5-kinase family.

Its subcellular location is the cytoplasm. The catalysed reaction is L-glutamate + ATP = L-glutamyl 5-phosphate + ADP. It participates in amino-acid biosynthesis; L-proline biosynthesis; L-glutamate 5-semialdehyde from L-glutamate: step 1/2. Catalyzes the transfer of a phosphate group to glutamate to form L-glutamate 5-phosphate. This is Glutamate 5-kinase from Burkholderia orbicola (strain MC0-3).